A 365-amino-acid chain; its full sequence is Phospho-N-acetylmuramoyl-pentapeptide-transferase (365 aa).

10 consecutive transmembrane segments (helical) span residues 29–49 (VGGL…IIVW), 73–93 (GTPT…VIIW), 97–117 (SNIY…LGLV), 133–153 (ILNK…IMFI), 171–191 (IVCK…VGTS), 202–222 (GLVI…TWVV), 242–262 (LVVV…FNSY), 266–286 (IFMG…VSIL), 291–311 (YLLL…IFQV), and 341–361 (IVVR…VIFI).

The protein belongs to the glycosyltransferase 4 family. MraY subfamily. The cofactor is Mg(2+).

It localises to the cell inner membrane. The enzyme catalyses UDP-N-acetyl-alpha-D-muramoyl-L-alanyl-gamma-D-glutamyl-meso-2,6-diaminopimeloyl-D-alanyl-D-alanine + di-trans,octa-cis-undecaprenyl phosphate = di-trans,octa-cis-undecaprenyl diphospho-N-acetyl-alpha-D-muramoyl-L-alanyl-D-glutamyl-meso-2,6-diaminopimeloyl-D-alanyl-D-alanine + UMP. Its pathway is cell wall biogenesis; peptidoglycan biosynthesis. In terms of biological role, catalyzes the initial step of the lipid cycle reactions in the biosynthesis of the cell wall peptidoglycan: transfers peptidoglycan precursor phospho-MurNAc-pentapeptide from UDP-MurNAc-pentapeptide onto the lipid carrier undecaprenyl phosphate, yielding undecaprenyl-pyrophosphoryl-MurNAc-pentapeptide, known as lipid I. In Blochmanniella floridana, this protein is Phospho-N-acetylmuramoyl-pentapeptide-transferase.